The primary structure comprises 249 residues: 23S rRNA (guanosine-2'-O-)-methyltransferase RlmB (249 aa).

Positions 200, 220, and 229 each coordinate S-adenosyl-L-methionine.

The protein belongs to the class IV-like SAM-binding methyltransferase superfamily. RNA methyltransferase TrmH family. RlmB subfamily.

It localises to the cytoplasm. It carries out the reaction guanosine(2251) in 23S rRNA + S-adenosyl-L-methionine = 2'-O-methylguanosine(2251) in 23S rRNA + S-adenosyl-L-homocysteine + H(+). Functionally, specifically methylates the ribose of guanosine 2251 in 23S rRNA. In Xylella fastidiosa (strain Temecula1 / ATCC 700964), this protein is 23S rRNA (guanosine-2'-O-)-methyltransferase RlmB.